The sequence spans 542 residues: Chromatin structure-remodeling complex subunit rsc4 (542 aa).

The 111-residue stretch at 6-116 (HNAPFDKTKF…NTANSLESKD (111 aa)) folds into the Bromo 1 domain. Disordered regions lie at residues 114–139 (SKDG…KPGT) and 246–327 (ISSF…PIPE). Positions 119–128 (LNEEENEEME) are enriched in acidic residues. Residues 139 to 249 (TNEIDVPKVI…QLSSSLISSF (111 aa)) enclose the Bromo 2 domain. Positions 252–266 (QPKEHSPATSKHEPE) are enriched in basic and acidic residues. Phosphoserine occurs at positions 257, 271, 287, and 313. The segment covering 268–280 (TPASPTPSVSAST) has biased composition (low complexity). Over residues 286–298 (TSVAPSFITSDQA) the composition is skewed to polar residues. Residues 304–322 (LKSEEAHVESFSKESEKDQ) show a composition bias toward basic and acidic residues.

Component of the RSC complex composed of at least arp9, arp42, rsc1, rsc4, rsc7, rsc9, rsc58, sfh1, snf21, ssr1, ssr2, ssr3 and ssr4. The complex interacts with histone and histone variant components of centromeric chromatin.

It is found in the nucleus. Its function is as follows. Component of the chromatin structure remodeling complex (RSC), which is involved in transcription regulation and nucleosome positioning. Controls particularly membrane and organelle development genes. The sequence is that of Chromatin structure-remodeling complex subunit rsc4 (rsc4) from Schizosaccharomyces pombe (strain 972 / ATCC 24843) (Fission yeast).